Reading from the N-terminus, the 157-residue chain is Large ribosomal subunit protein uL15 (157 aa).

This sequence belongs to the universal ribosomal protein uL15 family. As to quaternary structure, part of the 50S ribosomal subunit.

Binds to the 23S rRNA. The chain is Large ribosomal subunit protein uL15 from Ehrlichia ruminantium (strain Welgevonden).